Here is a 1187-residue protein sequence, read N- to C-terminus: BAI1-associated protein 3 (1187 aa).

Positions 55-81 (SFRRRTEQDPGSASADPQEPATGAWKP) are disordered. Positions 176 to 335 (SLEEHTEAIE…VKSARANGTA (160 aa)) constitute a C2 1 domain. Ca(2+) is bound by residues aspartate 211, aspartate 217, aspartate 295, and aspartate 297. One can recognise an MHD1 domain in the interval 663-784 (FELYLTLADL…EATLFYTELL (122 aa)). The MHD2 domain maps to 888–996 (DEAVAPLMKY…CSTRECIEQF (109 aa)). One can recognise a C2 2 domain in the interval 1010 to 1136 (RFGRLSVRCH…GVARPQVGGG (127 aa)). Ca(2+) contacts are provided by leucine 1040, aspartate 1041, aspartate 1047, aspartate 1105, aspartate 1107, serine 1110, and aspartate 1113.

Belongs to the unc-13 family. In terms of assembly, interacts with ADGRB1; this interaction is direct. Interacts with endosomal SNARE proteins VAMP3, VAMP4, STX6 and STX16; this interaction is increased in the presence of calcium. The cofactor is Ca(2+). Predominantly expressed in brain. Also expressed in nonneural tissues such as breast and testes epithelium.

It localises to the cytoplasm. Its subcellular location is the cytosol. The protein resides in the recycling endosome membrane. The protein localises to the late endosome membrane. It is found in the golgi apparatus. It localises to the trans-Golgi network membrane. Its subcellular location is the cell membrane. Functions in endosome to Golgi retrograde transport. In response to calcium influx, may interact with SNARE fusion receptors and membrane phospholipids to mediate endosome fusion with the trans-Golgi network. By promoting the recycling of secretory vesicle transmembrane proteins, it indirectly controls dense-core secretory vesicle biogenesis, maturation and their ability to mediate the constitutive and regulated secretion of neurotransmitters and hormones. May regulate behavior and food intake by controlling calcium-stimulated exocytosis of neurotransmitters including NPY and serotonin and hormones like insulin. Proposed to play a role in hypothalamic neuronal firing by modulating gamma-aminobutyric acid (GABA)ergic inhibitory neurotransmission. The sequence is that of BAI1-associated protein 3 from Homo sapiens (Human).